Consider the following 471-residue polypeptide: MTDLPDSTRWQLWIVAFGFFMQSLDTTIVNTALPSMAQSLGESPLHMHMVIVSYVLTVAVMLPASGWLADKVGVRNIFFTAIVLFTLGSLFCALSGTLNELLLARALQGVGGAMMVPVGRLTVMKIVPREQYMAAMTFVTLPGQVGPLLGPALGGLLVEYASWHWIFLINIPVGIIGAIATLMLMPNYTMQTRRFDLSGFLLLAVGMAVLTLALDGSKGTGLSPLAIAGLVAVGVVALVLYLLHARNNNRALFSLKLFRTRTFSLGLAGSFAGRIGSGMLPFMTPVFLQIGLGFSPFHAGLMMIPMVLGSMGMKRIVVQVVNRFGYRRVLVATTLGLSLVTLLFMTTALLGWYYVLPFVLFLQGMVNSTRFSSMNTLTLKDLPDNLASSGNSLLSMIMQLSMSIGVTIAGLLLGLFGSQHISVDSGTTQTVFMYTWLSMAFIIALPAFIFARVPNDTHQNVAISRRKRSAQ.

Topologically, residues 1–11 (MTDLPDSTRWQ) are periplasmic. The helical transmembrane segment at 12–32 (LWIVAFGFFMQSLDTTIVNTA) threads the bilayer. Topologically, residues 33 to 48 (LPSMAQSLGESPLHMH) are cytoplasmic. The chain crosses the membrane as a helical span at residues 49–69 (MVIVSYVLTVAVMLPASGWLA). Residues 70-76 (DKVGVRN) are Periplasmic-facing. The helical transmembrane segment at 77–97 (IFFTAIVLFTLGSLFCALSGT) threads the bilayer. Residues 98 to 101 (LNEL) lie on the Cytoplasmic side of the membrane. Residues 102–124 (LLARALQGVGGAMMVPVGRLTVM) traverse the membrane as a helical segment. Topologically, residues 125–137 (KIVPREQYMAAMT) are periplasmic. Residues 138 to 158 (FVTLPGQVGPLLGPALGGLLV) traverse the membrane as a helical segment. At 159–164 (EYASWH) the chain is on the cytoplasmic side. Residues 165 to 185 (WIFLINIPVGIIGAIATLMLM) traverse the membrane as a helical segment. The Periplasmic segment spans residues 186–196 (PNYTMQTRRFD). Residues 197-217 (LSGFLLLAVGMAVLTLALDGS) traverse the membrane as a helical segment. The Cytoplasmic segment spans residues 218 to 224 (KGTGLSP). The helical transmembrane segment at 225 to 245 (LAIAGLVAVGVVALVLYLLHA) threads the bilayer. The Periplasmic segment spans residues 246-262 (RNNNRALFSLKLFRTRT). A helical membrane pass occupies residues 263 to 283 (FSLGLAGSFAGRIGSGMLPFM). Residues 284-285 (TP) are Cytoplasmic-facing. The helical transmembrane segment at 286-306 (VFLQIGLGFSPFHAGLMMIPM) threads the bilayer. The Periplasmic portion of the chain corresponds to 307–341 (VLGSMGMKRIVVQVVNRFGYRRVLVATTLGLSLVT). The chain crosses the membrane as a helical span at residues 342–362 (LLFMTTALLGWYYVLPFVLFL). The Cytoplasmic portion of the chain corresponds to 363–395 (QGMVNSTRFSSMNTLTLKDLPDNLASSGNSLLS). Residues 396–416 (MIMQLSMSIGVTIAGLLLGLF) traverse the membrane as a helical segment. Residues 417-430 (GSQHISVDSGTTQT) lie on the Periplasmic side of the membrane. The chain crosses the membrane as a helical span at residues 431-451 (VFMYTWLSMAFIIALPAFIFA). Residues 452–471 (RVPNDTHQNVAISRRKRSAQ) are Cytoplasmic-facing.

Belongs to the major facilitator superfamily. TCR/Tet family.

It is found in the cell inner membrane. The protein is Putative multidrug resistance protein MdtD of Shigella flexneri.